The following is a 31-amino-acid chain: Cytochrome b6-f complex subunit 6 (31 aa).

A helical membrane pass occupies residues 4-24; it reads ITSYFGFLLAALTITSALFIG.

This sequence belongs to the PetL family. As to quaternary structure, the 4 large subunits of the cytochrome b6-f complex are cytochrome b6, subunit IV (17 kDa polypeptide, PetD), cytochrome f and the Rieske protein, while the 4 small subunits are PetG, PetL, PetM and PetN. The complex functions as a dimer.

It is found in the plastid. It localises to the chloroplast thylakoid membrane. Component of the cytochrome b6-f complex, which mediates electron transfer between photosystem II (PSII) and photosystem I (PSI), cyclic electron flow around PSI, and state transitions. PetL is important for photoautotrophic growth as well as for electron transfer efficiency and stability of the cytochrome b6-f complex. The sequence is that of Cytochrome b6-f complex subunit 6 from Citrus sinensis (Sweet orange).